A 181-amino-acid polypeptide reads, in one-letter code: ATP synthase subunit b (181 aa).

Residues 16 to 36 (LIPPIPELVIGLIAFVIVFGF) traverse the membrane as a helical segment.

It belongs to the ATPase B chain family. In terms of assembly, F-type ATPases have 2 components, F(1) - the catalytic core - and F(0) - the membrane proton channel. F(1) has five subunits: alpha(3), beta(3), gamma(1), delta(1), epsilon(1). F(0) has three main subunits: a(1), b(2) and c(10-14). The alpha and beta chains form an alternating ring which encloses part of the gamma chain. F(1) is attached to F(0) by a central stalk formed by the gamma and epsilon chains, while a peripheral stalk is formed by the delta and b chains.

It localises to the cell membrane. Functionally, f(1)F(0) ATP synthase produces ATP from ADP in the presence of a proton or sodium gradient. F-type ATPases consist of two structural domains, F(1) containing the extramembraneous catalytic core and F(0) containing the membrane proton channel, linked together by a central stalk and a peripheral stalk. During catalysis, ATP synthesis in the catalytic domain of F(1) is coupled via a rotary mechanism of the central stalk subunits to proton translocation. Component of the F(0) channel, it forms part of the peripheral stalk, linking F(1) to F(0). The sequence is that of ATP synthase subunit b from Streptomyces lividans.